We begin with the raw amino-acid sequence, 122 residues long: uncharacterized protein (122 aa).

Positions M1–R15 are enriched in basic and acidic residues. The segment at M1 to S49 is disordered. A compositionally biased stretch (low complexity) spans L16–P32.

This is an uncharacterized protein from Homo sapiens (Human).